The sequence spans 71 residues: Large ribosomal subunit protein bL28 (71 aa).

Belongs to the bacterial ribosomal protein bL28 family.

The polypeptide is Large ribosomal subunit protein bL28 (Finegoldia magna (strain ATCC 29328 / DSM 20472 / WAL 2508) (Peptostreptococcus magnus)).